Here is an 866-residue protein sequence, read N- to C-terminus: Putative linoleate 9S-lipoxygenase 3 (866 aa).

One can recognise a PLAT domain in the interval 33-161 (NDFGATVIDG…KYRYDRVFFA (129 aa)). In terms of domain architecture, Lipoxygenase spans 164-866 (AYLPSQMPAA…AKGIPNSISI (703 aa)). The tract at residues 206–250 (YNDLGSPDSGNPRPILGGSPDTPYPRRGRTGRKPTTTDPDSESRL) is disordered. Fe cation is bound by residues His-521, His-526, His-712, Asn-716, and Ile-866.

This sequence belongs to the lipoxygenase family. Requires Fe cation as cofactor.

The enzyme catalyses (9Z,12Z)-octadecadienoate + O2 = (9S)-hydroperoxy-(10E,12Z)-octadecadienoate. Its pathway is lipid metabolism; oxylipin biosynthesis. Its function is as follows. Plant lipoxygenase may be involved in a number of diverse aspects of plant physiology including growth and development, pest resistance, and senescence or responses to wounding. Catalyzes the hydroperoxidation of lipids containing a cis,cis-1,4-pentadiene structure. The sequence is that of Putative linoleate 9S-lipoxygenase 3 from Oryza sativa subsp. japonica (Rice).